Consider the following 351-residue polypeptide: DNA beta-glucosyltransferase (351 aa).

Monomer.

The enzyme catalyses Transfers a beta-D-glucosyl residue from UDP-alpha-D-glucose to a hydroxymethylcytosine residue in DNA.. It functions in the pathway genetic information processing; DNA modification. Functionally, catalyzes the transfer of glucose from uridine diphosphoglucose to 5-hydroxymethyl cytosine of T4 DNA to yield glucosyl 5-hydroxymethyl cytosine (glc-HMC). This DNA process seems to occur immediately after DNA synthesis since the DNA alpha-glucosyltransferase interacts with the clamp protein gp45. The glc-HMC modification protects the phage genome against its own nucleases and the host restriction endonuclease system. The glc-HMC modification also protects against the host CRISPR-Cas9 defense system. This is DNA beta-glucosyltransferase (bgt) from Enterobacteria phage T4 (Bacteriophage T4).